Reading from the N-terminus, the 115-residue chain is Dolichyl-diphosphooligosaccharide--protein glycosyltransferase subunit DAD1 (115 aa).

Residues 1–31 are Cytoplasmic-facing; sequence MVKSTSKDAQDLFRSLRSAYSATPTNLKIID. Residues 32–52 form a helical membrane-spanning segment; it reads LYVVFAVFTALIQVVYMALVG. Residues 53–55 lie on the Lumenal side of the membrane; the sequence is SFP. A helical membrane pass occupies residues 56–76; that stretch reads FNSFLSGVLSCIGTAVLAVCL. At 77–94 the chain is on the cytoplasmic side; it reads RIQVNKENKEFKDLAPER. A helical transmembrane segment spans residues 95-115; sequence AFADFVLCNLVLHLVIINFLG.

This sequence belongs to the DAD/OST2 family. Component of the oligosaccharyltransferase (OST) complex. In terms of tissue distribution, ubiquitous.

The protein resides in the endoplasmic reticulum membrane. The protein operates within protein modification; protein glycosylation. Its function is as follows. Subunit of the oligosaccharyl transferase (OST) complex that catalyzes the initial transfer of a defined glycan (Glc(3)Man(9)GlcNAc(2) in eukaryotes) from the lipid carrier dolichol-pyrophosphate to an asparagine residue within an Asn-X-Ser/Thr consensus motif in nascent polypeptide chains, the first step in protein N-glycosylation. N-glycosylation occurs cotranslationally and the complex associates with the Sec61 complex at the channel-forming translocon complex that mediates protein translocation across the endoplasmic reticulum (ER). All subunits are required for a maximal enzyme activity. This is Dolichyl-diphosphooligosaccharide--protein glycosyltransferase subunit DAD1 (DAD1) from Arabidopsis thaliana (Mouse-ear cress).